The sequence spans 386 residues: Phosphoglycerate kinase (386 aa).

Substrate-binding positions include 21-23 (DLN), R36, 59-62 (HLGR), R113, and R146. Residues K197, E314, and 340–343 (GGDT) each bind ATP.

Belongs to the phosphoglycerate kinase family. In terms of assembly, monomer.

The protein resides in the cytoplasm. The enzyme catalyses (2R)-3-phosphoglycerate + ATP = (2R)-3-phospho-glyceroyl phosphate + ADP. The protein operates within carbohydrate degradation; glycolysis; pyruvate from D-glyceraldehyde 3-phosphate: step 2/5. This chain is Phosphoglycerate kinase, found in Vibrio vulnificus (strain CMCP6).